Consider the following 27-residue polypeptide: Conotoxin Bt9.2 (27 aa).

3 disulfide bridges follow: Cys2–Cys16, Cys6–Cys19, and Cys12–Cys24. The residue at position 13 (Pro13) is a 4-hydroxyproline.

Expressed by the venom duct.

Its subcellular location is the secreted. Its function is as follows. Probable neurotoxin that inhibits ion channels. In Conus betulinus (Beech cone), this protein is Conotoxin Bt9.2.